We begin with the raw amino-acid sequence, 249 residues long: 3-deoxy-manno-octulosonate cytidylyltransferase (249 aa).

It belongs to the KdsB family.

The protein resides in the cytoplasm. It catalyses the reaction 3-deoxy-alpha-D-manno-oct-2-ulosonate + CTP = CMP-3-deoxy-beta-D-manno-octulosonate + diphosphate. The protein operates within nucleotide-sugar biosynthesis; CMP-3-deoxy-D-manno-octulosonate biosynthesis; CMP-3-deoxy-D-manno-octulosonate from 3-deoxy-D-manno-octulosonate and CTP: step 1/1. It functions in the pathway bacterial outer membrane biogenesis; lipopolysaccharide biosynthesis. Functionally, activates KDO (a required 8-carbon sugar) for incorporation into bacterial lipopolysaccharide in Gram-negative bacteria. The polypeptide is 3-deoxy-manno-octulosonate cytidylyltransferase (Serratia proteamaculans (strain 568)).